The sequence spans 338 residues: MNNSADITVLGAGSYGTALAISLASNGHKTLLWGHDPAHMQTLAEDKCNQAFLPGIAFPECLHIEADLAKALAASNNVLVVVPSHVFGTVLAQAKPLLRQDARIVWATKGLEPETGRLLQDVARDVLGEQYPLAVLSGPTFAKELAMGLPTAISVAGTCPQFTAELVELLHSPKRLRVYANDDFIGLQLGGAVKNVIAIGAGMSDGIGFGANARTALITRGLVELTRLGEALGASTATFMGMAGLGDLVLTCTDNQSRNRRFGLALGKGCDVDTAQVEIGQVVEGYRNTKEVFTLAKRLGVEMPITEQIYQVLYQGKSPVDAAKELLGREKKSETPTQ.

NADPH is bound by residues Ser14, Tyr15, His35, and Lys109. Sn-glycerol 3-phosphate-binding residues include Lys109, Gly138, and Thr140. An NADPH-binding site is contributed by Ala142. Residues Lys194, Asp247, Ser257, Arg258, and Asn259 each coordinate sn-glycerol 3-phosphate. The active-site Proton acceptor is Lys194. NADPH is bound at residue Arg258. 2 residues coordinate NADPH: Val282 and Glu284.

The protein belongs to the NAD-dependent glycerol-3-phosphate dehydrogenase family.

Its subcellular location is the cytoplasm. It catalyses the reaction sn-glycerol 3-phosphate + NAD(+) = dihydroxyacetone phosphate + NADH + H(+). The enzyme catalyses sn-glycerol 3-phosphate + NADP(+) = dihydroxyacetone phosphate + NADPH + H(+). It functions in the pathway membrane lipid metabolism; glycerophospholipid metabolism. Its function is as follows. Catalyzes the reduction of the glycolytic intermediate dihydroxyacetone phosphate (DHAP) to sn-glycerol 3-phosphate (G3P), the key precursor for phospholipid synthesis. The chain is Glycerol-3-phosphate dehydrogenase [NAD(P)+] from Shewanella oneidensis (strain ATCC 700550 / JCM 31522 / CIP 106686 / LMG 19005 / NCIMB 14063 / MR-1).